The chain runs to 510 residues: ATP synthase subunit alpha (510 aa).

169–176 lines the ATP pocket; that stretch reads GDRQTGKT.

The protein belongs to the ATPase alpha/beta chains family. F-type ATPases have 2 components, CF(1) - the catalytic core - and CF(0) - the membrane proton channel. CF(1) has five subunits: alpha(3), beta(3), gamma(1), delta(1), epsilon(1). CF(0) has three main subunits: a(1), b(2) and c(9-12). The alpha and beta chains form an alternating ring which encloses part of the gamma chain. CF(1) is attached to CF(0) by a central stalk formed by the gamma and epsilon chains, while a peripheral stalk is formed by the delta and b chains.

Its subcellular location is the cell inner membrane. It catalyses the reaction ATP + H2O + 4 H(+)(in) = ADP + phosphate + 5 H(+)(out). Functionally, produces ATP from ADP in the presence of a proton gradient across the membrane. The alpha chain is a regulatory subunit. This Afipia carboxidovorans (strain ATCC 49405 / DSM 1227 / KCTC 32145 / OM5) (Oligotropha carboxidovorans) protein is ATP synthase subunit alpha.